Here is a 156-residue protein sequence, read N- to C-terminus: MSRKGHIKKRDVQPDPIYNSKLVTKTINTIMEDGKKGKAQTIFYQALKQVKTITNRDPIEVFHEALNNIMPVLEVRTRRVGGQNYQVPSEVRPERRHSLGLRWLVKYTKERNEKTMEERLAKEIVDASLGNGVSVKKREETHRMAEANKAFAHYRW.

Belongs to the universal ribosomal protein uS7 family. Part of the 30S ribosomal subunit. Contacts proteins S9 and S11.

One of the primary rRNA binding proteins, it binds directly to 16S rRNA where it nucleates assembly of the head domain of the 30S subunit. Is located at the subunit interface close to the decoding center, probably blocks exit of the E-site tRNA. This Aster yellows witches'-broom phytoplasma (strain AYWB) protein is Small ribosomal subunit protein uS7.